The primary structure comprises 61 residues: Conotoxin Tx-D021 (61 aa).

The signal sequence occupies residues 1-22; sequence MRCLPVFVILLLLIASTPSVDA. Residues 23-48 constitute a propeptide that is removed on maturation; sequence RAKTRDDMSLASFHDDAKRILQILQD. Cysteine amide is present on C60.

The protein belongs to the conotoxin T superfamily. Contains 2 disulfide bonds that can be either 'C1-C3, C2-C4' or 'C1-C4, C2-C3', since these disulfide connectivities have been observed for conotoxins with cysteine framework V (for examples, see AC P0DQQ7 and AC P81755). As to expression, expressed by the venom duct.

It localises to the secreted. This is Conotoxin Tx-D021 from Conus textile (Cloth-of-gold cone).